A 1013-amino-acid chain; its full sequence is Retinoblastoma-related protein 1 (1013 aa).

The segment at 406–607 (TPVSTAMTTA…EKGSSMYNSL (202 aa)) is domain A. Residues 406–858 (TPVSTAMTTA…NEIFIPAVKP (453 aa)) form a pocket region. The segment at 608–727 (IVARPSLALE…PGGGGETCAE (120 aa)) is spacer. The interval 728-858 (TGINIFFTKI…NEIFIPAVKP (131 aa)) is domain B. Phosphoserine occurs at positions 885 and 898. Residues 979-1013 (VANSLNLQNQNQNQNGSDASSSGGAAPLKTEPTDS) are disordered. Residues 980-1004 (ANSLNLQNQNQNQNGSDASSSGGAA) are compositionally biased toward low complexity.

This sequence belongs to the retinoblastoma protein (RB) family. As to quaternary structure, interacts with the begomovirus replication-associated protein (Rep), the nanovirus Clink protein, the mastrevirus RepA protein, E2FA, E2FB and E2FC. Interacts with MSI1 through its Domain A. Interacts with ATPK1/S6K1. Interacts with SCR. Interacts with HAT2. Interacts with FAMA. Interacts with MYB124 and MYB88. Component of a DREAM-like complex which modulates a variety of developmentally regulated genes and of the mitotic genes in proliferating and differentiated cells. Associates with MYB3R3 in both earlier and later stages of leaves development. Interacts with MYB3R4 only at early stages of leaves development. Post-translationally, highly phosphorylated by CDKA-1 during G1 to S phase transition. Once hyper-phosphorylated, becomes inactive and unable to interact with E2F. In terms of processing, ubiquitinated. Subject to proteasome-dependent degradation during sucrose starvation. As to expression, expressed in actively dividing cells. Detected in the shoot apical meristem, in young leaf primordia and in both sporophytic tissue and the megagametophyte.

It is found in the nucleus. Key regulator of entry into cell division. Acts as a transcription repressor of E2F target genes, whose activity is required for progress from the G1 to the S phase of the cell cycle. Hyperphosphorylation by CDKA-1 prevents the binding to E2F transcription factors, allowing G1 to S phase transition to operate. Forms a stable complex with E2FA that functions in maintaining cell proliferation through repression of cell differentiation. Plays a central role in the mechanism controlling meristem cell differentiation, cell fate establishment and cell fate maintenance during organogenesis and gametogenesis. Required during lateral organ production. Also involved in controlling asymmetric divisions of stem cells in different stem cell niches. Acts as a negative regulator of cell proliferation during leaf and gametophytes development. At later stages of development, restricts the progression through additional endocycles. In the leaf, plays a role in the control of the mesophyll differentiation. Another role is its implication in the regulation of imprinted genes. Acts together with MSI1 to repress the expression of MET1 during gametogenesis. This in turn activates expression of the imprinted genes FIS2 and FWA. Regulates many genes of the polycomb repressive complex 2 (PRC2). Plays an important role in meiosis affecting different aspects of this complex process. Functions as a positive regulator of the developmental switch from embryonic heterotrophic growth to autotrophic growth. Interaction with mastrevirus RepA or nanovirus Clink protein disrupts the RBR/E2F interaction and releases the transcription of replicative enzymes needed by the virus by increasing the E2F DNA-binding activity. The sequence is that of Retinoblastoma-related protein 1 (RBR1) from Arabidopsis thaliana (Mouse-ear cress).